A 212-amino-acid chain; its full sequence is Interleukin-6 (212 aa).

A signal peptide spans 1–29 (MNSFSTSAFGPVAFSLGLLLVLPAAFPAP). 2 disulfides stabilise this stretch: Cys72-Cys78 and Cys101-Cys111. Residue Asn73 is glycosylated (N-linked (GlcNAc...) asparagine). Asn172 carries N-linked (GlcNAc...) asparagine glycosylation.

This sequence belongs to the IL-6 superfamily. In terms of assembly, component of a hexamer of two molecules each of IL6, IL6R and IL6ST; first binds to IL6R to associate with the signaling subunit IL6ST. Interacts with IL6R (via the N-terminal ectodomain); this interaction may be affected by IL6R-binding with SORL1, hence decreasing IL6 cis signaling. Interacts with SORL1 (via the N-terminal ectodomain); this interaction leads to IL6 internalization and lysosomal degradation. May form a trimeric complex with the soluble SORL1 ectodomain and soluble IL6R receptor; this interaction might stabilize circulating IL6, hence promoting IL6 trans signaling.

The protein resides in the secreted. Its function is as follows. Cytokine with a wide variety of biological functions in immunity, tissue regeneration, and metabolism. Binds to IL6R, then the complex associates to the signaling subunit IL6ST/gp130 to trigger the intracellular IL6-signaling pathway. The interaction with the membrane-bound IL6R and IL6ST stimulates 'classic signaling', whereas the binding of IL6 and soluble IL6R to IL6ST stimulates 'trans-signaling'. Alternatively, 'cluster signaling' occurs when membrane-bound IL6:IL6R complexes on transmitter cells activate IL6ST receptors on neighboring receiver cells. Functionally, IL6 is a potent inducer of the acute phase response. Rapid production of IL6 contributes to host defense during infection and tissue injury, but excessive IL6 synthesis is involved in disease pathology. In the innate immune response, is synthesized by myeloid cells, such as macrophages and dendritic cells, upon recognition of pathogens through toll-like receptors (TLRs) at the site of infection or tissue injury. In the adaptive immune response, is required for the differentiation of B cells into immunoglobulin-secreting cells. Plays a major role in the differentiation of CD4(+) T cell subsets. Essential factor for the development of T follicular helper (Tfh) cells that are required for the induction of germinal-center formation. Required to drive naive CD4(+) T cells to the Th17 lineage. Also required for proliferation of myeloma cells and the survival of plasmablast cells. Acts as an essential factor in bone homeostasis and on vessels directly or indirectly by induction of VEGF, resulting in increased angiogenesis activity and vascular permeability. Induces, through 'trans-signaling' and synergistically with IL1B and TNF, the production of VEGF. Involved in metabolic controls, is discharged into the bloodstream after muscle contraction increasing lipolysis and improving insulin resistance. 'Trans-signaling' in central nervous system also regulates energy and glucose homeostasis. Mediates, through GLP-1, crosstalk between insulin-sensitive tissues, intestinal L cells and pancreatic islets to adapt to changes in insulin demand. Also acts as a myokine. Plays a protective role during liver injury, being required for maintenance of tissue regeneration. Also has a pivotal role in iron metabolism by regulating HAMP/hepcidin expression upon inflammation or bacterial infection. Through activation of IL6ST-YAP-NOTCH pathway, induces inflammation-induced epithelial regeneration. This Cercocebus atys (Sooty mangabey) protein is Interleukin-6 (IL6).